The following is a 288-amino-acid chain: Transmembrane protein 163 (288 aa).

Basic and acidic residues predominate over residues 1-11 (MERAPGSERRS). The tract at residues 1–64 (MERAPGSERR…ESGQFSDGFE (64 aa)) is disordered. Residues 1 to 87 (MERAPGSERR…HEAQNYRKKA (87 aa)) are Cytoplasmic-facing. Position 11 is a phosphoserine (Ser-11). Positions 12 to 24 (PPGPGVPRPPPRG) are enriched in pro residues. Residues 25–42 (HAPSTAAPAPNPAPLSSS) show a composition bias toward low complexity. Residues 41 to 71 (SSMQPDEERQPRISESGQFSDGFEDRGLLES) form a required for interaction with MCOLN1 region. 3 positions are modified to phosphoserine: Ser-54, Ser-56, and Ser-60. A helical transmembrane segment spans residues 88-108 (LWVSWLSIIVTLALAVAAFTV). Residues 109 to 115 (SVMRYSA) are Extracellular-facing. Residues 116 to 136 (SAFGFAFDAILDVLSSAIVLW) traverse the membrane as a helical segment. The Cytoplasmic portion of the chain corresponds to 137-149 (RYSNAAAVHSAHR). Residues 150 to 170 (EYIACVILGVIFLLSSICIVV) traverse the membrane as a helical segment. The Extracellular portion of the chain corresponds to 171–186 (KAIHDLSTRLLPEVDD). Residues 187 to 207 (FLFSVSILSGILCSVLAVLKF) form a helical membrane-spanning segment. Residues 208–216 (MLGKVLTSR) are Cytoplasmic-facing. The chain crosses the membrane as a helical span at residues 217-237 (ALITDGFNSLVGGVMGFSILL). The Extracellular portion of the chain corresponds to 238-254 (SAEVFKHNAAVWYLDGS). The chain crosses the membrane as a helical span at residues 255–275 (IGVLIGLTIFAYGVKLLIDMV). Residues 276–288 (PRVRQTRHYEMFE) are Cytoplasmic-facing.

This sequence belongs to the TMEM163 family. As to quaternary structure, homodimer. Interacts with MCOLN1. Interacts with SLC30A1, SLC30A2, SLC30A3 and SLC30A4. In terms of tissue distribution, strongly expressed in brain. Also detected in lung, liver, kidney and spleen. Mainly expressed in the glutaminergic neuron subpopulations.

The protein resides in the cytoplasmic vesicle. It localises to the secretory vesicle. The protein localises to the synaptic vesicle membrane. It is found in the early endosome membrane. Its subcellular location is the late endosome membrane. The protein resides in the lysosome membrane. It localises to the cell membrane. It catalyses the reaction Zn(2+)(in) = Zn(2+)(out). Its function is as follows. Zinc ion transporter that mediates zinc efflux and plays a crucial role in intracellular zinc homeostasis. Binds the divalent cations Zn(2+), Ni(2+), and to a minor extent Cu(2+). Is a functional modulator of P2X purinoceptors, including P2RX1, P2RX3, P2RX4 and P2RX7. Plays a role in central nervous system development and is required for myelination, and survival and proliferation of oligodendrocytes. The sequence is that of Transmembrane protein 163 (Tmem163) from Rattus norvegicus (Rat).